The chain runs to 213 residues: 3-isopropylmalate dehydratase small subunit (213 aa).

It belongs to the LeuD family. LeuD type 1 subfamily. Heterodimer of LeuC and LeuD.

It catalyses the reaction (2R,3S)-3-isopropylmalate = (2S)-2-isopropylmalate. It functions in the pathway amino-acid biosynthesis; L-leucine biosynthesis; L-leucine from 3-methyl-2-oxobutanoate: step 2/4. Functionally, catalyzes the isomerization between 2-isopropylmalate and 3-isopropylmalate, via the formation of 2-isopropylmaleate. The sequence is that of 3-isopropylmalate dehydratase small subunit from Aromatoleum aromaticum (strain DSM 19018 / LMG 30748 / EbN1) (Azoarcus sp. (strain EbN1)).